The sequence spans 740 residues: Ribosome-releasing factor 2, mitochondrial (740 aa).

The N-terminal 29 residues, 1-29 (MLKYAWQSGPKQSNRWLWHLSNQIWKRSY), are a transit peptide targeting the mitochondrion. The region spanning 31 to 310 (SKIRNIGILA…AVNAYLPAPE (280 aa)) is the tr-type G domain. GTP contacts are provided by residues 40–47 (AHIDAGKT), 104–108 (DTPGH), and 158–161 (NKMD).

The protein belongs to the TRAFAC class translation factor GTPase superfamily. Classic translation factor GTPase family. EF-G/EF-2 subfamily.

It localises to the mitochondrion. Mitochondrial GTPase that mediates the disassembly of ribosomes from messenger RNA at the termination of mitochondrial protein biosynthesis. Not involved in the GTP-dependent ribosomal translocation step during translation elongation. This chain is Ribosome-releasing factor 2, mitochondrial, found in Drosophila melanogaster (Fruit fly).